We begin with the raw amino-acid sequence, 252 residues long: MAAASLAVFCRRVSAALKASTSLISSQTLASTGCRFSLSLLTKNTPNVTSFHQCRLLQTTLSRRGLEEFFDDPKNWGEEKVKSGASWTCQQLRNKSNEDLHKLWYVLLKERNMLLTLEQEAKRQRLPMPSPERLEKVVDSMDALDKVVQEREDALRLLQTGQEKPRPGAWRRDIFGRIIWHKFKQWPIPWYLNKRYNRKRFFAMPYVERFVRLRIEKQARIKARKISLTQKKEKFLQKKFPHLSEAQKSSAA.

Lys-146 carries the N6-acetyllysine modification.

Belongs to the universal ribosomal protein uL29 family. Component of the mitochondrial ribosome large subunit (39S) which comprises a 16S rRNA and about 50 distinct proteins.

It localises to the mitochondrion. The chain is Large ribosomal subunit protein uL29m (MRPL47) from Bos taurus (Bovine).